The sequence spans 213 residues: Orotate phosphoribosyltransferase (213 aa).

K26 lines the 5-phospho-alpha-D-ribose 1-diphosphate pocket. 34–35 provides a ligand contact to orotate; the sequence is FF. 5-phospho-alpha-D-ribose 1-diphosphate is bound by residues 72 to 73, R99, K100, K103, H105, and 124 to 132; these read YK and DDVITAGTS. Residues T128 and R156 each coordinate orotate.

This sequence belongs to the purine/pyrimidine phosphoribosyltransferase family. PyrE subfamily. Homodimer. Mg(2+) serves as cofactor.

It catalyses the reaction orotidine 5'-phosphate + diphosphate = orotate + 5-phospho-alpha-D-ribose 1-diphosphate. It functions in the pathway pyrimidine metabolism; UMP biosynthesis via de novo pathway; UMP from orotate: step 1/2. Its function is as follows. Catalyzes the transfer of a ribosyl phosphate group from 5-phosphoribose 1-diphosphate to orotate, leading to the formation of orotidine monophosphate (OMP). The polypeptide is Orotate phosphoribosyltransferase (Methylococcus capsulatus (strain ATCC 33009 / NCIMB 11132 / Bath)).